The following is a 98-amino-acid chain: NADH-ubiquinone oxidoreductase chain 4L (98 aa).

3 helical membrane-spanning segments follow: residues 2-22, 29-49, and 61-81; these read PSIS…MLMF, SLLC…LIIL, and ILLL…LVTV.

Belongs to the complex I subunit 4L family. Core subunit of respiratory chain NADH dehydrogenase (Complex I) which is composed of 45 different subunits.

Its subcellular location is the mitochondrion inner membrane. It catalyses the reaction a ubiquinone + NADH + 5 H(+)(in) = a ubiquinol + NAD(+) + 4 H(+)(out). Core subunit of the mitochondrial membrane respiratory chain NADH dehydrogenase (Complex I) which catalyzes electron transfer from NADH through the respiratory chain, using ubiquinone as an electron acceptor. Part of the enzyme membrane arm which is embedded in the lipid bilayer and involved in proton translocation. This chain is NADH-ubiquinone oxidoreductase chain 4L (MT-ND4L), found in Microcebus mamiratra (Claire's mouse lemur).